Reading from the N-terminus, the 433-residue chain is F-box/kelch-repeat protein At1g24800 (433 aa).

Residues 23–71 (TSMCDLPPKLVGEKILTRIPITSLRAVRSTCKLWNALTKDRVLGKAAAQ) enclose the F-box domain. Kelch repeat units lie at residues 170–216 (HKIL…LYGV) and 286–337 (VLYH…RFDN).

The chain is F-box/kelch-repeat protein At1g24800 from Arabidopsis thaliana (Mouse-ear cress).